A 133-amino-acid chain; its full sequence is MAYRKMLKSKIHRACVTQADLDYEGSITISPELLKVANILPYEAVNVWNITAGTRFETYAITGEKGSTDICVNGAAAHLVTPGDLVIIASFTQILEEDCAAHEPTVVFVDQFNRLKEIRPERIGVKSRIPNPA.

The active-site Schiff-base intermediate with substrate; via pyruvic acid is the Ser26. The residue at position 26 (Ser26) is a Pyruvic acid (Ser). Thr58 is a binding site for substrate. The Proton donor role is filled by Tyr59. 74 to 76 (GAA) lines the substrate pocket.

The protein belongs to the PanD family. As to quaternary structure, heterooctamer of four alpha and four beta subunits. Pyruvate is required as a cofactor. In terms of processing, is synthesized initially as an inactive proenzyme, which is activated by self-cleavage at a specific serine bond to produce a beta-subunit with a hydroxyl group at its C-terminus and an alpha-subunit with a pyruvoyl group at its N-terminus.

It localises to the cytoplasm. The catalysed reaction is L-aspartate + H(+) = beta-alanine + CO2. It participates in cofactor biosynthesis; (R)-pantothenate biosynthesis; beta-alanine from L-aspartate: step 1/1. In terms of biological role, catalyzes the pyruvoyl-dependent decarboxylation of aspartate to produce beta-alanine. The polypeptide is Aspartate 1-decarboxylase (Legionella pneumophila subsp. pneumophila (strain Philadelphia 1 / ATCC 33152 / DSM 7513)).